Consider the following 70-residue polypeptide: Protein SlyX homolog (70 aa).

Residues 51–70 (RMREAEANRPGPTNEPPPHY) form a disordered region.

Belongs to the SlyX family.

The protein is Protein SlyX homolog of Nitrobacter hamburgensis (strain DSM 10229 / NCIMB 13809 / X14).